The following is a 338-amino-acid chain: Glycerol-3-phosphate dehydrogenase [NAD(P)+] (338 aa).

The NADPH site is built by Ser-14, Phe-15, Arg-35, and Lys-109. Residues Lys-109 and Gly-137 each coordinate sn-glycerol 3-phosphate. Position 141 (Ala-141) interacts with NADPH. Sn-glycerol 3-phosphate contacts are provided by Lys-192, Asp-247, Ser-257, Arg-258, and Asn-259. The active-site Proton acceptor is the Lys-192. Arg-258 provides a ligand contact to NADPH. NADPH contacts are provided by Leu-282 and Glu-284.

It belongs to the NAD-dependent glycerol-3-phosphate dehydrogenase family.

Its subcellular location is the cytoplasm. It catalyses the reaction sn-glycerol 3-phosphate + NAD(+) = dihydroxyacetone phosphate + NADH + H(+). The catalysed reaction is sn-glycerol 3-phosphate + NADP(+) = dihydroxyacetone phosphate + NADPH + H(+). It participates in membrane lipid metabolism; glycerophospholipid metabolism. Functionally, catalyzes the reduction of the glycolytic intermediate dihydroxyacetone phosphate (DHAP) to sn-glycerol 3-phosphate (G3P), the key precursor for phospholipid synthesis. The protein is Glycerol-3-phosphate dehydrogenase [NAD(P)+] of Rickettsia rickettsii (strain Iowa).